Here is a 238-residue protein sequence, read N- to C-terminus: Ribonuclease PH (238 aa).

Residues R86 and 124 to 126 contribute to the phosphate site; that span reads GTR.

The protein belongs to the RNase PH family. Homohexameric ring arranged as a trimer of dimers.

The catalysed reaction is tRNA(n+1) + phosphate = tRNA(n) + a ribonucleoside 5'-diphosphate. In terms of biological role, phosphorolytic 3'-5' exoribonuclease that plays an important role in tRNA 3'-end maturation. Removes nucleotide residues following the 3'-CCA terminus of tRNAs; can also add nucleotides to the ends of RNA molecules by using nucleoside diphosphates as substrates, but this may not be physiologically important. Probably plays a role in initiation of 16S rRNA degradation (leading to ribosome degradation) during starvation. The protein is Ribonuclease PH of Actinobacillus succinogenes (strain ATCC 55618 / DSM 22257 / CCUG 43843 / 130Z).